Here is a 365-residue protein sequence, read N- to C-terminus: Protein RecA (365 aa).

76-83 (GPESSGKT) is an ATP binding site. The tract at residues 346–365 (DVPGSERDGDEDAGDMEASA) is disordered. Positions 353–365 (DGDEDAGDMEASA) are enriched in acidic residues.

It belongs to the RecA family.

The protein resides in the cytoplasm. Can catalyze the hydrolysis of ATP in the presence of single-stranded DNA, the ATP-dependent uptake of single-stranded DNA by duplex DNA, and the ATP-dependent hybridization of homologous single-stranded DNAs. It interacts with LexA causing its activation and leading to its autocatalytic cleavage. The chain is Protein RecA from Parvibaculum lavamentivorans (strain DS-1 / DSM 13023 / NCIMB 13966).